Here is a 118-residue protein sequence, read N- to C-terminus: Transcription factor PAR2 (118 aa).

Positions 1-59 are disordered; it reads MEKTLATSHTKRSSPPSPSSAVNTSSTGFNRRTRQRLSDATASVSETDVEDEDEDEEGV. Positions 19–30 are enriched in polar residues; sequence SSAVNTSSTGFN. Residues 43–92 form the bHLH domain; that stretch reads SVSETDVEDEDEDEEGVEEKIEALQTIVPGGTELGVDALFEETASYILAL. Residues 47-59 are compositionally biased toward acidic residues; the sequence is TDVEDEDEDEEGV.

This sequence belongs to the bHLH protein family. As to quaternary structure, homodimer.

The protein localises to the nucleus. Atypical bHLH transcription factor that acts as a negative regulator of a variety of shade avoidance syndrome (SAS) responses, including seedling elongation and photosynthetic pigment accumulation. Acts as a direct transcriptional repressor of two auxin-responsive genes, SAUR15 and SAUR68. May function in integrating shade and hormone transcriptional networks in response to light and auxin changes. The sequence is that of Transcription factor PAR2 (PAR2) from Arabidopsis thaliana (Mouse-ear cress).